Consider the following 362-residue polypeptide: Chorismate synthase (362 aa).

2 residues coordinate NADP(+): Arg-48 and Arg-54. FMN is bound by residues 125–127 (RSS), 238–239 (NA), Gly-278, 293–297 (KPTSS), and Arg-319.

Belongs to the chorismate synthase family. Homotetramer. FMNH2 serves as cofactor.

The enzyme catalyses 5-O-(1-carboxyvinyl)-3-phosphoshikimate = chorismate + phosphate. It participates in metabolic intermediate biosynthesis; chorismate biosynthesis; chorismate from D-erythrose 4-phosphate and phosphoenolpyruvate: step 7/7. Its function is as follows. Catalyzes the anti-1,4-elimination of the C-3 phosphate and the C-6 proR hydrogen from 5-enolpyruvylshikimate-3-phosphate (EPSP) to yield chorismate, which is the branch point compound that serves as the starting substrate for the three terminal pathways of aromatic amino acid biosynthesis. This reaction introduces a second double bond into the aromatic ring system. The sequence is that of Chorismate synthase from Tolumonas auensis (strain DSM 9187 / NBRC 110442 / TA 4).